Here is a 157-residue protein sequence, read N- to C-terminus: Cell cycle regulator of non-homologous end joining (157 aa).

Met-1 carries the N-acetylmethionine modification. The short motif at 1–21 (METLQSETKTRVLPSWLTAQV) is the KBM element. Residues 77 to 147 (KACEQPALAG…SPEEEEEEDV (71 aa)) form a disordered region. Residues 98-107 (VSPHTSSGSS) are compositionally biased toward low complexity. The segment covering 123 to 136 (SPSQRPGGSSSACS) has biased composition (polar residues). The XLM motif lies at 147-157 (VLKYVREIFFS).

Interacts (via KBM motif) with XRCC5/Ku80 and XRCC6/Ku70 heterodimer. Interacts (via XLF motif) with TRIM28/KAP1, ATM, MRE11, NBN and RAD50. Interacts with splicing factor SF3B1. Interacts with ERCC6L2; this interaction is DNA independent. In terms of assembly, does not interact with XRCC5/Ku80 and XRCC6/Ku70 heterodimer. As to quaternary structure, interacts (via KBM motif) with XRCC5/Ku80 and XRCC6/Ku70 heterodimer.

It localises to the cytoplasm. The protein resides in the nucleus. It is found in the chromosome. Its function is as follows. Cell-cycle-specific regulator of classical non-homologous end joining (NHEJ) of DNA double-strand break (DSB) repair, which can act both as an activator or inhibitor of NHEJ, depending on the cell cycle phase. Acts as a regulator of DNA repair pathway choice by specifically inhibiting classical NHEJ during the S and G2 phases, thereby promoting error-free repair by homologous recombination during cell cycle phases when sister chromatids are present. Preferentially protects single-stranded overhangs at break sites by inhibiting classical NHEJ, thereby creating a local environment that favors homologous recombination. Acts via interaction with XRCC5/Ku80 and XRCC6/Ku70. In contrast, acts as an activator of NHEJ during G1 phase of the cell cycle: promotes classical NHEJ in G1 phase cells via multivalent interactions that increase the affinity of DNA damage response proteins for DSB-associated chromatin. Also involved in immunoglobulin V(D)J recombination. May also act as an indirect regulator of proteasome. The polypeptide is Cell cycle regulator of non-homologous end joining (Homo sapiens (Human)).